Here is a 430-residue protein sequence, read N- to C-terminus: Probable sugar isomerase mlr5709 (430 aa).

Mn(2+)-binding residues include H257, D289, and D291.

Belongs to the rhamnose isomerase family. The cofactor is Mn(2+).

The sequence is that of Probable sugar isomerase mlr5709 from Mesorhizobium japonicum (strain LMG 29417 / CECT 9101 / MAFF 303099) (Mesorhizobium loti (strain MAFF 303099)).